The chain runs to 329 residues: rRNA 2'-O-methyltransferase fibrillarin (329 aa).

Residues 1–85 (MAFGAPRGRG…GGARGGARGG (85 aa)) form a disordered region. Gly residues predominate over residues 13 to 84 (RGGFGGRGGS…RGGARGGARG (72 aa)). S-adenosyl-L-methionine contacts are provided by residues 181 to 182 (TS), 200 to 201 (EF), 225 to 226 (DA), and 245 to 248 (DVAQ).

This sequence belongs to the methyltransferase superfamily. Fibrillarin family. As to quaternary structure, component of box C/D small nucleolar ribonucleoprotein (snoRNP) particles that contain SNU13, NOP1, SIK1/NOP56 and NOP58, plus a guide RNA. In terms of processing, by homology to other fibrillarins, some or all of the N-terminal domain arginines are modified to asymmetric dimethylarginine (DMA).

Its subcellular location is the nucleus. It is found in the nucleolus. The enzyme catalyses L-glutaminyl-[histone H2A] + S-adenosyl-L-methionine = N(5)-methyl-L-glutaminyl-[histone H2A] + S-adenosyl-L-homocysteine + H(+). Functionally, S-adenosyl-L-methionine-dependent methyltransferase that has the ability to methylate both RNAs and proteins. Involved in pre-rRNA processing. Utilizes the methyl donor S-adenosyl-L-methionine to catalyze the site-specific 2'-hydroxyl methylation of ribose moieties in pre-ribosomal RNA. Site specificity is provided by a guide RNA that base pairs with the substrate. Methylation occurs at a characteristic distance from the sequence involved in base pairing with the guide RNA. Also acts as a protein methyltransferase by mediating methylation of 'Gln-105' of histone H2A (H2AQ105me), a modification that impairs binding of the FACT complex and is specifically present at 35S ribosomal DNA locus. This chain is rRNA 2'-O-methyltransferase fibrillarin (NOP1), found in Debaryomyces hansenii (strain ATCC 36239 / CBS 767 / BCRC 21394 / JCM 1990 / NBRC 0083 / IGC 2968) (Yeast).